The following is a 466-amino-acid chain: Asparagine--tRNA ligase (466 aa).

The protein belongs to the class-II aminoacyl-tRNA synthetase family. As to quaternary structure, homodimer.

It localises to the cytoplasm. It carries out the reaction tRNA(Asn) + L-asparagine + ATP = L-asparaginyl-tRNA(Asn) + AMP + diphosphate + H(+). The polypeptide is Asparagine--tRNA ligase (Shigella dysenteriae serotype 1 (strain Sd197)).